The following is a 468-amino-acid chain: Probable Xaa-Pro aminopeptidase pepP (468 aa).

Residues D265, D276, E399, and E439 each contribute to the Mn(2+) site.

The protein belongs to the peptidase M24B family. Mn(2+) serves as cofactor.

The enzyme catalyses Release of any N-terminal amino acid, including proline, that is linked to proline, even from a dipeptide or tripeptide.. Functionally, catalyzes the removal of a penultimate prolyl residue from the N-termini of peptides. The protein is Probable Xaa-Pro aminopeptidase pepP (pepP) of Aspergillus fumigatus (strain CBS 144.89 / FGSC A1163 / CEA10) (Neosartorya fumigata).